A 132-amino-acid chain; its full sequence is Small ribosomal subunit protein uS8 (132 aa).

It belongs to the universal ribosomal protein uS8 family. Part of the 30S ribosomal subunit. Contacts proteins S5 and S12.

One of the primary rRNA binding proteins, it binds directly to 16S rRNA central domain where it helps coordinate assembly of the platform of the 30S subunit. The sequence is that of Small ribosomal subunit protein uS8 from Corynebacterium glutamicum (strain R).